The following is a 396-amino-acid chain: Tryptophan synthase beta chain (396 aa).

Lysine 88 carries the post-translational modification N6-(pyridoxal phosphate)lysine.

The protein belongs to the TrpB family. In terms of assembly, tetramer of two alpha and two beta chains. It depends on pyridoxal 5'-phosphate as a cofactor.

It carries out the reaction (1S,2R)-1-C-(indol-3-yl)glycerol 3-phosphate + L-serine = D-glyceraldehyde 3-phosphate + L-tryptophan + H2O. It participates in amino-acid biosynthesis; L-tryptophan biosynthesis; L-tryptophan from chorismate: step 5/5. The beta subunit is responsible for the synthesis of L-tryptophan from indole and L-serine. The chain is Tryptophan synthase beta chain from Shewanella putrefaciens (strain CN-32 / ATCC BAA-453).